Consider the following 220-residue polypeptide: Deoxyribose-phosphate aldolase (220 aa).

The active-site Proton donor/acceptor is Asp89. Lys151 serves as the catalytic Schiff-base intermediate with acetaldehyde. The active-site Proton donor/acceptor is Lys180.

The protein belongs to the DeoC/FbaB aldolase family. DeoC type 1 subfamily.

It is found in the cytoplasm. The catalysed reaction is 2-deoxy-D-ribose 5-phosphate = D-glyceraldehyde 3-phosphate + acetaldehyde. It participates in carbohydrate degradation; 2-deoxy-D-ribose 1-phosphate degradation; D-glyceraldehyde 3-phosphate and acetaldehyde from 2-deoxy-alpha-D-ribose 1-phosphate: step 2/2. Catalyzes a reversible aldol reaction between acetaldehyde and D-glyceraldehyde 3-phosphate to generate 2-deoxy-D-ribose 5-phosphate. This is Deoxyribose-phosphate aldolase from Staphylococcus carnosus (strain TM300).